A 117-amino-acid chain; its full sequence is QSVKESEGGLFKPTDTLTLTCTVSGFSLSGYDMSWVRQAPGKGLEWIGVIYASGSTYYATWAKSRSTITRTSBTVBLMDSLTAQDTATYFCARGHTGLSYLKSSVDVWGPGTLVTVS.

Pyrrolidone carboxylic acid is present on Gln1. One can recognise an Ig-like domain in the interval 1–106 (QSVKESEGGL…GLSYLKSSVD (106 aa)). Residues Cys21 and Cys91 are joined by a disulfide bond.

This Oryctolagus cuniculus (Rabbit) protein is Ig heavy chain V-A2 region K-25.